Reading from the N-terminus, the 322-residue chain is Elongation factor P--(R)-beta-lysine ligase (322 aa).

A substrate-binding site is contributed by 72-74; the sequence is SPE. ATP-binding positions include 96-98 and Asn-106; that span reads RNN. Position 115 (Tyr-115) interacts with substrate. 241-242 serves as a coordination point for ATP; that stretch reads EL. Glu-248 serves as a coordination point for substrate. Gly-297 is an ATP binding site.

The protein belongs to the class-II aminoacyl-tRNA synthetase family. EpmA subfamily. Homodimer.

The enzyme catalyses D-beta-lysine + L-lysyl-[protein] + ATP = N(6)-((3R)-3,6-diaminohexanoyl)-L-lysyl-[protein] + AMP + diphosphate + H(+). Functionally, with EpmB is involved in the beta-lysylation step of the post-translational modification of translation elongation factor P (EF-P). Catalyzes the ATP-dependent activation of (R)-beta-lysine produced by EpmB, forming a lysyl-adenylate, from which the beta-lysyl moiety is then transferred to the epsilon-amino group of a conserved specific lysine residue in EF-P. This Buchnera aphidicola subsp. Baizongia pistaciae (strain Bp) protein is Elongation factor P--(R)-beta-lysine ligase.